The primary structure comprises 122 residues: Large ribosomal subunit protein uL14 (122 aa).

The protein belongs to the universal ribosomal protein uL14 family. In terms of assembly, part of the 50S ribosomal subunit. Forms a cluster with proteins L3 and L19. In the 70S ribosome, L14 and L19 interact and together make contacts with the 16S rRNA in bridges B5 and B8.

Binds to 23S rRNA. Forms part of two intersubunit bridges in the 70S ribosome. This Desulforamulus reducens (strain ATCC BAA-1160 / DSM 100696 / MI-1) (Desulfotomaculum reducens) protein is Large ribosomal subunit protein uL14.